Consider the following 229-residue polypeptide: 7-cyano-7-deazaguanine synthase (229 aa).

9–19 (YSGGLDSTTCM) serves as a coordination point for ATP. Zn(2+) contacts are provided by cysteine 189, cysteine 199, cysteine 202, and cysteine 205.

Belongs to the QueC family. The cofactor is Zn(2+).

It carries out the reaction 7-carboxy-7-deazaguanine + NH4(+) + ATP = 7-cyano-7-deazaguanine + ADP + phosphate + H2O + H(+). It functions in the pathway purine metabolism; 7-cyano-7-deazaguanine biosynthesis. Its function is as follows. Catalyzes the ATP-dependent conversion of 7-carboxy-7-deazaguanine (CDG) to 7-cyano-7-deazaguanine (preQ(0)). The chain is 7-cyano-7-deazaguanine synthase from Geotalea daltonii (strain DSM 22248 / JCM 15807 / FRC-32) (Geobacter daltonii).